The sequence spans 215 residues: NADH-quinone oxidoreductase subunit C (215 aa).

The protein belongs to the complex I 30 kDa subunit family. NDH-1 is composed of 14 different subunits. Subunits NuoB, C, D, E, F, and G constitute the peripheral sector of the complex.

It localises to the cell inner membrane. It carries out the reaction a quinone + NADH + 5 H(+)(in) = a quinol + NAD(+) + 4 H(+)(out). Functionally, NDH-1 shuttles electrons from NADH, via FMN and iron-sulfur (Fe-S) centers, to quinones in the respiratory chain. The immediate electron acceptor for the enzyme in this species is believed to be ubiquinone. Couples the redox reaction to proton translocation (for every two electrons transferred, four hydrogen ions are translocated across the cytoplasmic membrane), and thus conserves the redox energy in a proton gradient. The sequence is that of NADH-quinone oxidoreductase subunit C from Methylobacterium sp. (strain 4-46).